A 404-amino-acid chain; its full sequence is Mitochondrial intermembrane space import and assembly protein 40 (404 aa).

A mitochondrion-targeting transit peptide spans 1-34 (MVSAVSRQLVNRQLNRVLLRNARIAPFARATRFY). Residues 35 to 50 (SSKYAQESENAKRHKM) lie on the Mitochondrial matrix side of the membrane. The helical; Signal-anchor for type II membrane protein transmembrane segment at 51-71 (GLLIAGVAVAGAIVFVTPPQW) threads the bilayer. The Mitochondrial intermembrane portion of the chain corresponds to 72–404 (KKYFRAAKKV…PDEDTASKKD (333 aa)). Residues 84-287 (VAESKEDPVS…SAYNPDTGEI (204 aa)) are disordered. Residues 101-113 (ESVQESTEEPQQS) are compositionally biased toward low complexity. Polar residues predominate over residues 124–135 (EQAQDESASSGD). Composition is skewed to basic and acidic residues over residues 136 to 156 (SEAKKAHDEFADQNEASEKES), 226 to 237 (EEDKTPKAEELK), and 246 to 276 (EEPKKEDDSSKTIHSLNSEKDMEAVEEEVKQ). Disulfide bonds link Cys-291-Cys-293, Cys-302-Cys-335, and Cys-312-Cys-325. The region spanning 299-343 (HGPCGEEFKAAFSCFVYSEAEPKGIDCVEKFQHMQDCFRRYPEHY) is the CHCH domain. 2 short sequence motifs (cx9C motif) span residues 302–312 (CGEEFKAAFSC) and 325–335 (CVEKFQHMQDC). The tract at residues 346–404 (QLADPADDENVDHEKNLSEGKDTGVDSTPPKDEAYLKTEKEKKIEENASPDEDTASKKD) is disordered. Positions 357–391 (DHEKNLSEGKDTGVDSTPPKDEAYLKTEKEKKIEE) are enriched in basic and acidic residues.

Monomer. It depends on Cu(2+) as a cofactor. Requires Zn(2+) as cofactor.

Its subcellular location is the mitochondrion inner membrane. Functionally, required for the import and folding of small cysteine-containing proteins (small Tim) in the mitochondrial intermembrane space (IMS). Forms a redox cycle with ERV1 that involves a disulfide relay system. Precursor proteins to be imported into the IMS are translocated in their reduced form into the mitochondria. The oxidized form of MIA40 forms a transient intermolecular disulfide bridge with the reduced precursor protein, resulting in oxidation of the precursor protein that now contains an intramolecular disulfide bond and is able to undergo folding in the IMS. In Candida glabrata (strain ATCC 2001 / BCRC 20586 / JCM 3761 / NBRC 0622 / NRRL Y-65 / CBS 138) (Yeast), this protein is Mitochondrial intermembrane space import and assembly protein 40 (MIA40).